Consider the following 740-residue polypeptide: NAD(P)H-quinone oxidoreductase subunit 5, chloroplastic (740 aa).

The next 16 membrane-spanning stretches (helical) occupy residues 9–29 (WIIP…LILF), 40–60 (WAFQ…YLSI), 89–109 (IDPL…MVLI), 125–145 (FAYM…SNLI), 147–167 (IYIF…FWFT), 185–205 (GDFG…SFEF), 219–239 (NEVN…GAVA), 258–278 (TPIS…FLVA), 286–306 (VIPY…LLGA), 327–347 (LGYM…FHLI), 354–374 (ALLF…VGYS), 396–416 (ITFL…CFWS), 425–445 (WLYS…TAFY), 543–563 (LFPI…GIPF), 602–622 (VLSV…YKPI), and 718–738 (YLFL…LFFL).

Belongs to the complex I subunit 5 family. NDH is composed of at least 16 different subunits, 5 of which are encoded in the nucleus.

It localises to the plastid. The protein localises to the chloroplast thylakoid membrane. The enzyme catalyses a plastoquinone + NADH + (n+1) H(+)(in) = a plastoquinol + NAD(+) + n H(+)(out). It carries out the reaction a plastoquinone + NADPH + (n+1) H(+)(in) = a plastoquinol + NADP(+) + n H(+)(out). In terms of biological role, NDH shuttles electrons from NAD(P)H:plastoquinone, via FMN and iron-sulfur (Fe-S) centers, to quinones in the photosynthetic chain and possibly in a chloroplast respiratory chain. The immediate electron acceptor for the enzyme in this species is believed to be plastoquinone. Couples the redox reaction to proton translocation, and thus conserves the redox energy in a proton gradient. The chain is NAD(P)H-quinone oxidoreductase subunit 5, chloroplastic (ndhF) from Atropa belladonna (Belladonna).